The chain runs to 231 residues: DNA mismatch repair protein MutH (231 aa).

Belongs to the MutH family.

It is found in the cytoplasm. Functionally, sequence-specific endonuclease that cleaves unmethylated GATC sequences. It is involved in DNA mismatch repair. The chain is DNA mismatch repair protein MutH from Pectobacterium atrosepticum (strain SCRI 1043 / ATCC BAA-672) (Erwinia carotovora subsp. atroseptica).